The sequence spans 308 residues: Phenylcoumaran benzylic ether reductase PT1 (308 aa).

NADP(+) contacts are provided by residues 11–17 (GATGYIG), Arg36, and Lys46. Lys134 serves as the catalytic Proton acceptor. Arg138 lines the NADP(+) pocket.

Belongs to the NmrA-type oxidoreductase family. Isoflavone reductase subfamily.

It catalyses the reaction (-)-dehydrodiconiferyl alcohol + NADPH + H(+) = (S)-isodihydrodehydrodiconiferyl alcohol + NADP(+). It carries out the reaction (+)-dehydrodiconiferyl alcohol + NADPH + H(+) = (R)-isodihydrodehydrodiconiferyl alcohol + NADP(+). The enzyme catalyses (2R,3S)-dihydrodehydrodiconiferyl alcohol + NADPH + H(+) = (S)-tetrahydrodehydrodiconiferyl alcohol + NADP(+). The catalysed reaction is (2S,3R)-dihydrodehydrodiconiferyl alcohol + NADPH + H(+) = (R)-tetrahydrodehydrodiconiferyl alcohol + NADP(+). Oxidoreductase involved in lignan biosynthesis. Catalyzes the NADPH-dependent reduction of phenylcoumaran benzylic ethers. Converts dehydrodiconiferyl alcohol (DDC) to isodihydrodehydrodiconiferyl alcohol (IDDDC), and dihydrodehydrodiconiferyl alcohol (DDDC) to tetrahydrodehydrodiconiferyl alcohol (TDDC). This chain is Phenylcoumaran benzylic ether reductase PT1, found in Pinus taeda (Loblolly pine).